Here is a 225-residue protein sequence, read N- to C-terminus: 2-C-methyl-D-erythritol 4-phosphate cytidylyltransferase (225 aa).

The protein belongs to the IspD/TarI cytidylyltransferase family. IspD subfamily.

The catalysed reaction is 2-C-methyl-D-erythritol 4-phosphate + CTP + H(+) = 4-CDP-2-C-methyl-D-erythritol + diphosphate. It participates in isoprenoid biosynthesis; isopentenyl diphosphate biosynthesis via DXP pathway; isopentenyl diphosphate from 1-deoxy-D-xylulose 5-phosphate: step 2/6. Functionally, catalyzes the formation of 4-diphosphocytidyl-2-C-methyl-D-erythritol from CTP and 2-C-methyl-D-erythritol 4-phosphate (MEP). This Cereibacter sphaeroides (strain ATCC 17023 / DSM 158 / JCM 6121 / CCUG 31486 / LMG 2827 / NBRC 12203 / NCIMB 8253 / ATH 2.4.1.) (Rhodobacter sphaeroides) protein is 2-C-methyl-D-erythritol 4-phosphate cytidylyltransferase.